Here is a 154-residue protein sequence, read N- to C-terminus: 3-hydroxyacyl-[acyl-carrier-protein] dehydratase FabZ (154 aa).

His60 is a catalytic residue.

It belongs to the thioester dehydratase family. FabZ subfamily.

The protein localises to the cytoplasm. The enzyme catalyses a (3R)-hydroxyacyl-[ACP] = a (2E)-enoyl-[ACP] + H2O. In terms of biological role, involved in unsaturated fatty acids biosynthesis. Catalyzes the dehydration of short chain beta-hydroxyacyl-ACPs and long chain saturated and unsaturated beta-hydroxyacyl-ACPs. In Actinobacillus pleuropneumoniae serotype 5b (strain L20), this protein is 3-hydroxyacyl-[acyl-carrier-protein] dehydratase FabZ.